The chain runs to 209 residues: uncharacterized protein (209 aa).

This is an uncharacterized protein from Escherichia coli (strain K12).